The primary structure comprises 115 residues: NAD(P)H-quinone oxidoreductase subunit M (115 aa).

This sequence belongs to the complex I NdhM subunit family. As to quaternary structure, NDH-1 can be composed of about 15 different subunits; different subcomplexes with different compositions have been identified which probably have different functions.

It is found in the cellular thylakoid membrane. The enzyme catalyses a plastoquinone + NADH + (n+1) H(+)(in) = a plastoquinol + NAD(+) + n H(+)(out). The catalysed reaction is a plastoquinone + NADPH + (n+1) H(+)(in) = a plastoquinol + NADP(+) + n H(+)(out). Functionally, NDH-1 shuttles electrons from an unknown electron donor, via FMN and iron-sulfur (Fe-S) centers, to quinones in the respiratory and/or the photosynthetic chain. The immediate electron acceptor for the enzyme in this species is believed to be plastoquinone. Couples the redox reaction to proton translocation, and thus conserves the redox energy in a proton gradient. Cyanobacterial NDH-1 also plays a role in inorganic carbon-concentration. This chain is NAD(P)H-quinone oxidoreductase subunit M, found in Prochlorococcus marinus (strain MIT 9313).